Reading from the N-terminus, the 228-residue chain is 2,3-bisphosphoglycerate-dependent phosphoglycerate mutase (228 aa).

Substrate contacts are provided by residues 8–15 (RHGQSQWN), 21–22 (TG), R60, 87–90 (ERHY), K98, 114–115 (RR), and 180–181 (GN). H9 serves as the catalytic Tele-phosphohistidine intermediate. E87 functions as the Proton donor/acceptor in the catalytic mechanism.

This sequence belongs to the phosphoglycerate mutase family. BPG-dependent PGAM subfamily. In terms of assembly, homodimer.

The enzyme catalyses (2R)-2-phosphoglycerate = (2R)-3-phosphoglycerate. The protein operates within carbohydrate degradation; glycolysis; pyruvate from D-glyceraldehyde 3-phosphate: step 3/5. In terms of biological role, catalyzes the interconversion of 2-phosphoglycerate and 3-phosphoglycerate. In Erythrobacter litoralis (strain HTCC2594), this protein is 2,3-bisphosphoglycerate-dependent phosphoglycerate mutase.